The primary structure comprises 318 residues: D-alanine--D-alanine ligase (318 aa).

The 207-residue stretch at 101 to 307 folds into the ATP-grasp domain; sequence KKIIQYEGLP…FPDLIEKLVE (207 aa). 135 to 190 lines the ATP pocket; the sequence is CREMGLPLVVKAPTQGSTIGMSFVHKEEDMAGALELAYDYDPVALVEQFIRGTEVT. Asp-261, Glu-274, and Asn-276 together coordinate Mg(2+).

Belongs to the D-alanine--D-alanine ligase family. Mg(2+) serves as cofactor. Mn(2+) is required as a cofactor.

It localises to the cytoplasm. The catalysed reaction is 2 D-alanine + ATP = D-alanyl-D-alanine + ADP + phosphate + H(+). It participates in cell wall biogenesis; peptidoglycan biosynthesis. Cell wall formation. This is D-alanine--D-alanine ligase from Pelotomaculum thermopropionicum (strain DSM 13744 / JCM 10971 / SI).